The chain runs to 576 residues: Proline--tRNA ligase (576 aa).

The protein belongs to the class-II aminoacyl-tRNA synthetase family. ProS type 1 subfamily. In terms of assembly, homodimer.

The protein localises to the cytoplasm. It carries out the reaction tRNA(Pro) + L-proline + ATP = L-prolyl-tRNA(Pro) + AMP + diphosphate. In terms of biological role, catalyzes the attachment of proline to tRNA(Pro) in a two-step reaction: proline is first activated by ATP to form Pro-AMP and then transferred to the acceptor end of tRNA(Pro). As ProRS can inadvertently accommodate and process non-cognate amino acids such as alanine and cysteine, to avoid such errors it has two additional distinct editing activities against alanine. One activity is designated as 'pretransfer' editing and involves the tRNA(Pro)-independent hydrolysis of activated Ala-AMP. The other activity is designated 'posttransfer' editing and involves deacylation of mischarged Ala-tRNA(Pro). The misacylated Cys-tRNA(Pro) is not edited by ProRS. This is Proline--tRNA ligase from Finegoldia magna (strain ATCC 29328 / DSM 20472 / WAL 2508) (Peptostreptococcus magnus).